The sequence spans 237 residues: Carbohydrate deacetylase (237 aa).

Residues H59 and H125 each contribute to the Mg(2+) site.

This sequence belongs to the YdjC deacetylase family. It depends on Mg(2+) as a cofactor.

In terms of biological role, probably catalyzes the deacetylation of acetylated carbohydrates an important step in the degradation of oligosaccharides. The chain is Carbohydrate deacetylase from Halalkalibacterium halodurans (strain ATCC BAA-125 / DSM 18197 / FERM 7344 / JCM 9153 / C-125) (Bacillus halodurans).